Here is a 556-residue protein sequence, read N- to C-terminus: Dihydroxy-acid dehydratase (556 aa).

C47 lines the [2Fe-2S] cluster pocket. Residue D79 coordinates Mg(2+). C120 is a binding site for [2Fe-2S] cluster. D121 and K122 together coordinate Mg(2+). K122 is subject to N6-carboxylysine. C192 is a binding site for [2Fe-2S] cluster. Residue E444 coordinates Mg(2+). S470 functions as the Proton acceptor in the catalytic mechanism.

It belongs to the IlvD/Edd family. As to quaternary structure, homodimer. It depends on [2Fe-2S] cluster as a cofactor. Mg(2+) serves as cofactor.

It catalyses the reaction (2R)-2,3-dihydroxy-3-methylbutanoate = 3-methyl-2-oxobutanoate + H2O. The catalysed reaction is (2R,3R)-2,3-dihydroxy-3-methylpentanoate = (S)-3-methyl-2-oxopentanoate + H2O. Its pathway is amino-acid biosynthesis; L-isoleucine biosynthesis; L-isoleucine from 2-oxobutanoate: step 3/4. It functions in the pathway amino-acid biosynthesis; L-valine biosynthesis; L-valine from pyruvate: step 3/4. Functionally, functions in the biosynthesis of branched-chain amino acids. Catalyzes the dehydration of (2R,3R)-2,3-dihydroxy-3-methylpentanoate (2,3-dihydroxy-3-methylvalerate) into 2-oxo-3-methylpentanoate (2-oxo-3-methylvalerate) and of (2R)-2,3-dihydroxy-3-methylbutanoate (2,3-dihydroxyisovalerate) into 2-oxo-3-methylbutanoate (2-oxoisovalerate), the penultimate precursor to L-isoleucine and L-valine, respectively. This chain is Dihydroxy-acid dehydratase, found in Prochlorococcus marinus (strain NATL2A).